A 651-amino-acid polypeptide reads, in one-letter code: Meiotic expression up-regulated protein 6 (651 aa).

2 stretches are compositionally biased toward basic and acidic residues: residues 1 to 12 (MSYEGREERPEQ) and 21 to 30 (VSEHNEHDSG). Residues 1-102 (MSYEGREERP…EKKSKKKAKD (102 aa)) are disordered. Residues 72 to 83 (TVDNIDPADDDP) show a composition bias toward acidic residues. Positions 90-102 (KVEEKKSKKKAKD) are enriched in basic and acidic residues. The 68-residue stretch at 194–261 (CRGLLFYSKS…WITDLKNAIA (68 aa)) folds into the PH domain. 3 disordered regions span residues 365–430 (TVEA…GTPI), 468–514 (VATP…KGGN), and 587–630 (TIKP…QMPQ). Composition is skewed to polar residues over residues 410–429 (ESTS…NGTP) and 478–490 (PSTA…SVVS). The segment covering 497–514 (KKAGKKHHRHHKKKKGGN) has biased composition (basic residues). Residues 587 to 604 (TIKPETPLTPTTTPTPRT) show a composition bias toward low complexity.

This is Meiotic expression up-regulated protein 6 (meu6) from Schizosaccharomyces pombe (strain 972 / ATCC 24843) (Fission yeast).